Reading from the N-terminus, the 253-residue chain is Methionine-R-sulfoxide reductase B3, mitochondrial (253 aa).

A signal peptide spans 1–56 (MPPAAPSVARSREGGGIGQRRLVFPKSARRTLPCPIALCLGLCLAAAAATTTRASA). Lys102 is subject to N6-acetyllysine. The MsrB domain maps to 107–229 (QQELRKRLTP…NSASLSFTPA (123 aa)). Zn(2+) is bound by residues Cys146, Cys149, Cys195, and Cys198. The active-site Nucleophile is Cys218. Residues 227–253 (TPADSSEAEGSGIKESGSPAAADRAEL) are disordered. Ser244 is modified (phosphoserine). An Endoplasmic reticulum retention signal motif is present at residues 250 to 253 (RAEL).

It belongs to the MsrB Met sulfoxide reductase family. In terms of assembly, monomer. The cofactor is Zn(2+). As to expression, widely expressed. Detected in the sensory epithelia of the organ of Corti and vestibular end organs as early as P2 up to adulthood (at protein level). In the organ of Corti, present in inner and outer hair cells and, to a lesser extent, in supporting cells (at protein level). In hair cells, distributed throughout the cell body. Barely detectable level in stereocilia. Also observed in spiral ganglion neurons, but not in the stria vascularis. In the vestibular end organs, found throughout the sensory epithelium, but more intense expression in hair cells than in supporting cells (at protein level). In vestibular hair cells, present within cell bodies and to a lesser extent in kinocilia. Barely detectable in stereocilia.

It is found in the endoplasmic reticulum. It catalyses the reaction L-methionyl-[protein] + [thioredoxin]-disulfide + H2O = L-methionyl-(R)-S-oxide-[protein] + [thioredoxin]-dithiol. The catalysed reaction is [thioredoxin]-disulfide + L-methionine + H2O = L-methionine (R)-S-oxide + [thioredoxin]-dithiol. Catalyzes the reduction of free and protein-bound methionine sulfoxide to methionine. This is Methionine-R-sulfoxide reductase B3, mitochondrial (Msrb3) from Mus musculus (Mouse).